Consider the following 94-residue polypeptide: Cell division topological specificity factor (94 aa).

Belongs to the MinE family.

Prevents the cell division inhibition by proteins MinC and MinD at internal division sites while permitting inhibition at polar sites. This ensures cell division at the proper site by restricting the formation of a division septum at the midpoint of the long axis of the cell. The protein is Cell division topological specificity factor of Alkalilimnicola ehrlichii (strain ATCC BAA-1101 / DSM 17681 / MLHE-1).